The following is a 378-amino-acid chain: Probable dihydroorotase-like protein (378 aa).

The protein belongs to the metallo-dependent hydrolases superfamily. DHOase family. PyrC' subfamily.

In terms of biological role, non-functional DHOase. The protein is Probable dihydroorotase-like protein (pyrC') of Helicobacter pylori (strain J99 / ATCC 700824) (Campylobacter pylori J99).